Here is a 321-residue protein sequence, read N- to C-terminus: Glutathione synthetase (321 aa).

The ATP-grasp domain maps to 125–311; that stretch reads EKLFTGWFPH…IAGQFIAFLE (187 aa). An ATP-binding site is contributed by 151-208; it reads FIREQKEVVIKPLGAMAGESIFYLTVNDPNIPVVIETMTANGHQLVMAQRFIPEVKSG. Mg(2+) is bound by residues Glu-282 and Asn-284.

It belongs to the prokaryotic GSH synthase family. Requires Mg(2+) as cofactor. Mn(2+) is required as a cofactor.

It catalyses the reaction gamma-L-glutamyl-L-cysteine + glycine + ATP = glutathione + ADP + phosphate + H(+). Its pathway is sulfur metabolism; glutathione biosynthesis; glutathione from L-cysteine and L-glutamate: step 2/2. The polypeptide is Glutathione synthetase (Coxiella burnetii (strain RSA 493 / Nine Mile phase I)).